Reading from the N-terminus, the 375-residue chain is Phosphoglycerate kinase (375 aa).

(2R)-3-phosphoglycerate is bound by residues Val-1, Asp-2, Phe-3, Asn-4, Arg-17, Ser-40, His-41, Gly-43, Arg-44, Leu-99, Arg-100, His-147, and Arg-148. An ADP-binding site is contributed by Gly-191. CDP is bound at residue Gly-191. Residues Ala-192 and Lys-193 each coordinate AMP. Ala-192 is a binding site for ATP. Ala-192 contributes to the Mg(2+) binding site. Asp-196 lines the CDP pocket. Asp-196 provides a ligand contact to Mg(2+). Lys-197 is an AMP binding site. Lys-197 provides a ligand contact to ATP. Gly-215 provides a ligand contact to ADP. A CDP-binding site is contributed by Gly-215. Positions 216 and 290 each coordinate AMP. ATP-binding residues include Gly-216 and Gly-290. Gly-315 and Phe-320 together coordinate CDP. Phe-320 contacts ADP. Glu-321 provides a ligand contact to AMP. Residues Glu-321, Asp-352, and Thr-353 each coordinate ATP. Asp-352 provides a ligand contact to Mg(2+).

Belongs to the phosphoglycerate kinase family. In terms of assembly, monomer. The cofactor is Mg(2+).

The catalysed reaction is (2R)-3-phosphoglycerate + ATP = (2R)-3-phospho-glyceroyl phosphate + ADP. It functions in the pathway carbohydrate degradation; glycolysis; pyruvate from D-glyceraldehyde 3-phosphate: step 2/5. This chain is Phosphoglycerate kinase (PGK), found in Tetrahymena pyriformis.